A 100-amino-acid polypeptide reads, in one-letter code: Vesicle-associated membrane protein 8 (100 aa).

Over 1 to 74 (MEASGSAGND…ARKFWWKNVK (74 aa)) the chain is Cytoplasmic. 2 positions are modified to phosphoserine: S4 and S17. The v-SNARE coiled-coil homology domain maps to 11–71 (RVRNLQSEVE…QKVARKFWWK (61 aa)). A phosphothreonine mark is found at T27, T47, and T53. S54 is modified (phosphoserine). The helical; Anchor for type IV membrane protein transmembrane segment at 75-95 (MIVIICVIVLIILILIILFAT) threads the bilayer. Topologically, residues 96–100 (GTIPT) are vesicular.

This sequence belongs to the synaptobrevin family. In terms of assembly, forms a SNARE complex composed of VAMP8, SNAP29 and STX17 involved in fusion of autophagosome with lysosome. Found in a number of SNARE complexes with NAPA, SNAP23, SNAP25, STX1A, STX4, STX7, STX8 and VTI1B. Interacts with PICALM. SNARE complex formation and binding by PICALM are mutually exclusive processes for VAMP8. Interacts with SBF2/MTMR13. Interacts with RAB21 (in GTP-bound form) in response to starvation; the interaction probably regulates VAMP8 endolysosomal trafficking. Interacts with STX17; this interaction is increased in the absence of TMEM39A. Interacts with TRIM6. In terms of tissue distribution, expressed (at protein level) at a high level in kidney, lung and spleen; at a lower level in testis, liver, brain and heart. Expressed in kidney and retinal pigment epithelium derived cell line.

The protein resides in the lysosome membrane. It localises to the late endosome membrane. The protein localises to the early endosome membrane. Its subcellular location is the midbody. It is found in the cell membrane. The protein resides in the zymogen granule membrane. Functionally, SNAREs, soluble N-ethylmaleimide-sensitive factor-attachment protein receptors, are essential proteins for fusion of cellular membranes. SNAREs localized on opposing membranes assemble to form a trans-SNARE complex, an extended, parallel four alpha-helical bundle that drives membrane fusion. VAMP8 is a SNARE involved in autophagy through the direct control of autophagosome membrane fusion with the lysososome membrane via its interaction with the STX17-SNAP29 binary t-SNARE complex. Also required for dense-granule secretion in platelets. Also plays a role in regulated enzyme secretion in pancreatic acinar cells. Involved in the abscission of the midbody during cell division, which leads to completely separate daughter cells. Involved in the homotypic fusion of early and late endosomes. Also participates in the activation of type I interferon antiviral response through a TRIM6-dependent mechanism. This is Vesicle-associated membrane protein 8 from Rattus norvegicus (Rat).